We begin with the raw amino-acid sequence, 570 residues long: 4-hydroxy-7-methoxy-3-oxo-3,4-dihydro-2H-1,4-benzoxazin-2-yl glucoside beta-D-glucosidase 1c, chloroplastic (570 aa).

A chloroplast-targeting transit peptide spans 1–50; sequence MALLAAATLNPTTHLSIRSRAGHNSENLWLRSAASSQKSKGRFCNLTVRA. Residues Q92, H194, and 239–240 each bind a beta-D-glucoside; that span reads NE. Residue E240 is the Proton donor of the active site. An intrachain disulfide couples C259 to C265. A beta-D-glucoside is bound by residues Y383, E456, W504, 511 to 512, and F520; that span reads EW. The Nucleophile role is filled by E456.

This sequence belongs to the glycosyl hydrolase 1 family. In terms of assembly, homo- and heterohexamers. In terms of tissue distribution, expressed in young seedlings early after germination.

The protein resides in the plastid. The protein localises to the chloroplast. The enzyme catalyses Hydrolysis of terminal, non-reducing beta-D-glucosyl residues with release of beta-D-glucose.. It carries out the reaction DIMBOA beta-D-glucoside + H2O = DIMBOA + D-glucose. The catalysed reaction is DIBOA beta-D-glucoside + H2O = DIBOA + D-glucose. Acts in defense of young plant parts against pests via the production of hydroxamic acids from hydroxamic acid glucosides. Enzymatic activity is highly correlated with plant growth. The preferred substrate is DIMBOA-beta-D-glucoside. The chain is 4-hydroxy-7-methoxy-3-oxo-3,4-dihydro-2H-1,4-benzoxazin-2-yl glucoside beta-D-glucosidase 1c, chloroplastic (GLU1C) from Triticum aestivum (Wheat).